The primary structure comprises 712 residues: Ribosomal RNA large subunit methyltransferase K/L (712 aa).

The THUMP domain maps to 42–153 (QALRIVMWSR…KGRASLSIDL (112 aa)).

Belongs to the methyltransferase superfamily. RlmKL family.

The protein localises to the cytoplasm. It carries out the reaction guanosine(2445) in 23S rRNA + S-adenosyl-L-methionine = N(2)-methylguanosine(2445) in 23S rRNA + S-adenosyl-L-homocysteine + H(+). The enzyme catalyses guanosine(2069) in 23S rRNA + S-adenosyl-L-methionine = N(2)-methylguanosine(2069) in 23S rRNA + S-adenosyl-L-homocysteine + H(+). Functionally, specifically methylates the guanine in position 2445 (m2G2445) and the guanine in position 2069 (m7G2069) of 23S rRNA. This is Ribosomal RNA large subunit methyltransferase K/L from Stenotrophomonas maltophilia (strain R551-3).